Reading from the N-terminus, the 166-residue chain is Large ribosomal subunit protein uL10 (166 aa).

The protein belongs to the universal ribosomal protein uL10 family. In terms of assembly, part of the ribosomal stalk of the 50S ribosomal subunit. The N-terminus interacts with L11 and the large rRNA to form the base of the stalk. The C-terminus forms an elongated spine to which L12 dimers bind in a sequential fashion forming a multimeric L10(L12)X complex.

Its function is as follows. Forms part of the ribosomal stalk, playing a central role in the interaction of the ribosome with GTP-bound translation factors. The sequence is that of Large ribosomal subunit protein uL10 from Shewanella oneidensis (strain ATCC 700550 / JCM 31522 / CIP 106686 / LMG 19005 / NCIMB 14063 / MR-1).